The chain runs to 306 residues: MSVRHFLTLLDLSPAELEALIKRASELRKMQHAGEVYQPFVGRTLGMIFEKSSTRTRISFETGMGQFGGHAIFLSPKDTQLGRGEPIEDSARVISSMVDIIMIRTFEHEKVEKFAQYSSVPIINALTDDFHPCQLLADMQTFYEHRGSIKDKIVTWVGDGNNMCSSFMAAANQFGFELRVAAPYGFEPNPELMEKFKHCVSLVDDVQDAAKDAHLIVTDVWASMGQESEQNTRARRFAPYQVTPSMLDKADPEVLFMHCLPAHRGEEISHDMLDDPRSVVWDEAENRLHAQKALMEFLLKDKIKLN.

Residues 53-56 (STRT), Gln80, Arg104, and 131-134 (HPCQ) contribute to the carbamoyl phosphate site. L-ornithine is bound by residues Asn162, Asp219, and 223–224 (SM). Residues 259-260 (CL) and Arg287 each bind carbamoyl phosphate.

The protein belongs to the aspartate/ornithine carbamoyltransferase superfamily. OTCase family.

The protein localises to the cytoplasm. The catalysed reaction is carbamoyl phosphate + L-ornithine = L-citrulline + phosphate + H(+). Its pathway is amino-acid biosynthesis; L-arginine biosynthesis; L-arginine from L-ornithine and carbamoyl phosphate: step 1/3. Its function is as follows. Reversibly catalyzes the transfer of the carbamoyl group from carbamoyl phosphate (CP) to the N(epsilon) atom of ornithine (ORN) to produce L-citrulline. The protein is Ornithine carbamoyltransferase of Psychrobacter sp. (strain PRwf-1).